The sequence spans 280 residues: Shikimate dehydrogenase (NADP(+)) (280 aa).

Shikimate-binding positions include 23 to 25 (SLS) and threonine 70. The active-site Proton acceptor is lysine 74. Asparagine 95 and aspartate 111 together coordinate shikimate. NADP(+)-binding positions include 135-139 (GSGGA), 158-163 (NRTISK), and isoleucine 221. Tyrosine 223 contributes to the shikimate binding site. Glycine 247 is a binding site for NADP(+).

It belongs to the shikimate dehydrogenase family. In terms of assembly, homodimer.

It carries out the reaction shikimate + NADP(+) = 3-dehydroshikimate + NADPH + H(+). The protein operates within metabolic intermediate biosynthesis; chorismate biosynthesis; chorismate from D-erythrose 4-phosphate and phosphoenolpyruvate: step 4/7. Its function is as follows. Involved in the biosynthesis of the chorismate, which leads to the biosynthesis of aromatic amino acids. Catalyzes the reversible NADPH linked reduction of 3-dehydroshikimate (DHSA) to yield shikimate (SA). The protein is Shikimate dehydrogenase (NADP(+)) of Buchnera aphidicola subsp. Cinara cedri (strain Cc).